The sequence spans 124 residues: MDKDRIVGSAKEFAGRAEGAVGDLAGDAQTQASGKAREAAGTVQNLYGQAKDAVREASETAAGYAKDAYDNSGETFRDGSQAIARKVQDNPLGALLVAGGIGFALALLMSRPARRPPPRWRYYG.

The protein belongs to the UPF0337 (CsbD) family.

In Bradyrhizobium diazoefficiens (strain JCM 10833 / BCRC 13528 / IAM 13628 / NBRC 14792 / USDA 110), this protein is UPF0337 protein blr1496.